A 318-amino-acid polypeptide reads, in one-letter code: Retinol dehydrogenase 5 (318 aa).

A helical transmembrane segment spans residues 1 to 21 (MWLPLLLGALLWAVLWLLRDR). Over 22-288 (QSLPASNAFV…TRYSPGWDAK (267 aa)) the chain is Lumenal. Position 32–56 (32–56 (FITGCDSGFGRLLALQLDQRGFRVL)) interacts with NADP(+). Residue N160 is glycosylated (N-linked (GlcNAc...) asparagine). A substrate-binding site is contributed by S163. The Proton acceptor role is filled by Y175. A helical membrane pass occupies residues 289–309 (LLWLPASYLPASLVDAVLTWV). Residues 310 to 318 (LPKPAQAVY) are Cytoplasmic-facing.

It belongs to the short-chain dehydrogenases/reductases (SDR) family. In terms of assembly, homodimer. Widely expressed. In the eye, abundant in the retinal pigment epithelium.

The protein resides in the endoplasmic reticulum membrane. The enzyme catalyses 11-cis-retinol + NAD(+) = 11-cis-retinal + NADH + H(+). The catalysed reaction is 9-cis-retinol + NAD(+) = 9-cis-retinal + NADH + H(+). It carries out the reaction 13-cis-retinol + NAD(+) = 13-cis-retinal + NADH + H(+). It catalyses the reaction androsterone + NAD(+) = 5alpha-androstan-3,17-dione + NADH + H(+). The enzyme catalyses 5alpha-androstane-3alpha,17beta-diol + NAD(+) = 17beta-hydroxy-5alpha-androstan-3-one + NADH + H(+). It participates in cofactor metabolism; retinol metabolism. With respect to regulation, inhibited by 9-cis-, 13-cis- and all-trans-retinoic acids, with the most potent inhibitor being 13-cis-retinoic acid. Weakly inhibited by oleic acid. In terms of biological role, catalyzes the oxidation of cis-isomers of retinol, including 11-cis-, 9-cis-, and 13-cis-retinol in an NAD-dependent manner. Has no activity towards all-trans retinal. Plays a significant role in 11-cis retinol oxidation in the retinal pigment epithelium cells (RPE). Also recognizes steroids (androsterone, androstanediol) as its substrates. In Homo sapiens (Human), this protein is Retinol dehydrogenase 5.